Consider the following 369-residue polypeptide: Superinfection exclusion protein (369 aa).

A signal peptide spans 1–15; that stretch reads MIALLILSLTCSVST.

This sequence belongs to the serpin family. Orthopoxvirus OPG040 subfamily. Interacts with A56 protein.

Its subcellular location is the virion membrane. The protein resides in the host cell membrane. Prevents cell to cell fusion via its interaction with A56 protein. The A56-K2 complex associates with components of the entry fusion complex (EFC) presumably to avoid superinfection and syncytium formation. In Vaccinia virus (strain Copenhagen) (VACV), this protein is Superinfection exclusion protein (OPG040).